The following is a 273-amino-acid chain: Type III pantothenate kinase (273 aa).

Residue 5 to 12 (DVGNSHVV) coordinates ATP. A substrate-binding site is contributed by 112–115 (GTDL). Residue Asp-114 is the Proton acceptor of the active site. A K(+)-binding site is contributed by Asp-134. Thr-137 lines the ATP pocket. Thr-189 is a binding site for substrate.

The protein belongs to the type III pantothenate kinase family. As to quaternary structure, homodimer. The cofactor is NH4(+). K(+) serves as cofactor.

Its subcellular location is the cytoplasm. The catalysed reaction is (R)-pantothenate + ATP = (R)-4'-phosphopantothenate + ADP + H(+). It participates in cofactor biosynthesis; coenzyme A biosynthesis; CoA from (R)-pantothenate: step 1/5. Functionally, catalyzes the phosphorylation of pantothenate (Pan), the first step in CoA biosynthesis. This chain is Type III pantothenate kinase, found in Treponema pallidum (strain Nichols).